The sequence spans 483 residues: V-type proton ATPase subunit B 2 (483 aa).

The protein belongs to the ATPase alpha/beta chains family. As to quaternary structure, V-ATPase is a heteromultimeric enzyme composed of a peripheral catalytic V1 complex (main components: subunits A, B, C, D, E, and F) attached to an integral membrane V0 proton pore complex (main component: the proteolipid protein).

In terms of biological role, non-catalytic subunit of the peripheral V1 complex of vacuolar ATPase. V-ATPase is responsible for acidifying a variety of intracellular compartments in eukaryotic cells. The protein is V-type proton ATPase subunit B 2 of Hordeum vulgare (Barley).